Consider the following 236-residue polypeptide: 2-C-methyl-D-erythritol 4-phosphate cytidylyltransferase (236 aa).

This sequence belongs to the IspD/TarI cytidylyltransferase family. IspD subfamily.

The enzyme catalyses 2-C-methyl-D-erythritol 4-phosphate + CTP + H(+) = 4-CDP-2-C-methyl-D-erythritol + diphosphate. The protein operates within isoprenoid biosynthesis; isopentenyl diphosphate biosynthesis via DXP pathway; isopentenyl diphosphate from 1-deoxy-D-xylulose 5-phosphate: step 2/6. Its function is as follows. Catalyzes the formation of 4-diphosphocytidyl-2-C-methyl-D-erythritol from CTP and 2-C-methyl-D-erythritol 4-phosphate (MEP). This is 2-C-methyl-D-erythritol 4-phosphate cytidylyltransferase from Pseudomonas savastanoi pv. phaseolicola (strain 1448A / Race 6) (Pseudomonas syringae pv. phaseolicola (strain 1448A / Race 6)).